Reading from the N-terminus, the 345-residue chain is Guanine nucleotide-binding protein alpha-4 subunit (345 aa).

The 316-residue stretch at 30 to 345 folds into the G-alpha domain; it reads KDVKLLLLGP…TILSQALEHF (316 aa). The tract at residues 33 to 46 is G1 motif; the sequence is KLLLLGPGESGKST. GTP contacts are provided by residues 38–45, 171–177, 196–200, 265–268, and Ala320; these read GPGESGKS, LRCRVRT, DVGGQ, and NKKD. Residues Ser45 and Thr177 each coordinate Mg(2+). The segment at 169 to 177 is G2 motif; it reads DVLRCRVRT. The interval 192-201 is G3 motif; sequence LKIVDVGGQR. Residues 261–268 are G4 motif; sequence VLFLNKKD. Residues 318-323 are G5 motif; it reads TCAVDT.

The protein belongs to the G-alpha family. G proteins are composed of 3 units; alpha, beta and gamma. The alpha chain contains the guanine nucleotide binding site.

Functionally, guanine nucleotide-binding proteins (G proteins) are involved as modulators or transducers in various transmembrane signaling systems. G alpha-4 plays a role in morphogenesis of the multicellular structure. The polypeptide is Guanine nucleotide-binding protein alpha-4 subunit (gpaD) (Dictyostelium discoideum (Social amoeba)).